The following is a 193-amino-acid chain: Acyl carrier protein phosphodiesterase (193 aa).

This sequence belongs to the AcpH family.

The enzyme catalyses holo-[ACP] + H2O = apo-[ACP] + (R)-4'-phosphopantetheine + H(+). Functionally, converts holo-ACP to apo-ACP by hydrolytic cleavage of the phosphopantetheine prosthetic group from ACP. This chain is Acyl carrier protein phosphodiesterase, found in Shigella boydii serotype 4 (strain Sb227).